The sequence spans 860 residues: DNA mismatch repair protein MutS (860 aa).

Position 620–627 (620–627 (GPNMGGKS)) interacts with ATP.

It belongs to the DNA mismatch repair MutS family.

This protein is involved in the repair of mismatches in DNA. It is possible that it carries out the mismatch recognition step. This protein has a weak ATPase activity. In Dechloromonas aromatica (strain RCB), this protein is DNA mismatch repair protein MutS.